The sequence spans 316 residues: Pantothenate kinase (316 aa).

G95 to S102 provides a ligand contact to ATP.

The protein belongs to the prokaryotic pantothenate kinase family.

Its subcellular location is the cytoplasm. It catalyses the reaction (R)-pantothenate + ATP = (R)-4'-phosphopantothenate + ADP + H(+). Its pathway is cofactor biosynthesis; coenzyme A biosynthesis; CoA from (R)-pantothenate: step 1/5. The polypeptide is Pantothenate kinase (Shewanella sp. (strain MR-7)).